Here is a 234-residue protein sequence, read N- to C-terminus: MNVQQLKKRAAAKALEFVQDDMRLGIGTGSTANEFIRLLGERVADGLRVTGVATSQYSEQLCRKFGVPVTTLEQMPELDLDIDGADEIGPEMTLIKGGGGALWREKIVAAASRAMLVIADETKVVKTLGAFALPIEVNPFGMPATRRLIEKVADDLGLSGEIILRMNGENPFKTDGGHFIFDAFWGCILQPRLLSEALLAIPGVVEHGLFWGLASRAIVAMADGQIKVLESSDF.

Residues 28–31, 83–86, and 96–99 contribute to the substrate site; these read TGST, DGAD, and KGGG. The active-site Proton acceptor is the glutamate 105. Lysine 123 lines the substrate pocket.

The protein belongs to the ribose 5-phosphate isomerase family. In terms of assembly, homodimer.

The enzyme catalyses aldehydo-D-ribose 5-phosphate = D-ribulose 5-phosphate. It functions in the pathway carbohydrate degradation; pentose phosphate pathway; D-ribose 5-phosphate from D-ribulose 5-phosphate (non-oxidative stage): step 1/1. Its function is as follows. Catalyzes the reversible conversion of ribose-5-phosphate to ribulose 5-phosphate. The protein is Ribose-5-phosphate isomerase A of Bartonella quintana (strain Toulouse) (Rochalimaea quintana).